A 207-amino-acid chain; its full sequence is Inhibitor of hydrogen peroxide resistance (207 aa).

Positions 163-182 (MNYIHQRTRVSRSVVAEVLA) form a DNA-binding region, H-T-H motif.

Belongs to the IprA family.

Its function is as follows. Involved in oxidative stress resistance. In Salmonella typhimurium (strain LT2 / SGSC1412 / ATCC 700720), this protein is Inhibitor of hydrogen peroxide resistance.